A 614-amino-acid chain; its full sequence is 4-hydroxy-3-methylbut-2-en-1-yl diphosphate synthase (flavodoxin) (614 aa).

Positions 522, 525, 556, and 563 each coordinate [4Fe-4S] cluster.

Belongs to the IspG family. [4Fe-4S] cluster is required as a cofactor.

The catalysed reaction is (2E)-4-hydroxy-3-methylbut-2-enyl diphosphate + oxidized [flavodoxin] + H2O + 2 H(+) = 2-C-methyl-D-erythritol 2,4-cyclic diphosphate + reduced [flavodoxin]. It participates in isoprenoid biosynthesis; isopentenyl diphosphate biosynthesis via DXP pathway; isopentenyl diphosphate from 1-deoxy-D-xylulose 5-phosphate: step 5/6. Its function is as follows. Converts 2C-methyl-D-erythritol 2,4-cyclodiphosphate (ME-2,4cPP) into 1-hydroxy-2-methyl-2-(E)-butenyl 4-diphosphate. This chain is 4-hydroxy-3-methylbut-2-en-1-yl diphosphate synthase (flavodoxin), found in Phocaeicola vulgatus (strain ATCC 8482 / DSM 1447 / JCM 5826 / CCUG 4940 / NBRC 14291 / NCTC 11154) (Bacteroides vulgatus).